Here is a 281-residue protein sequence, read N- to C-terminus: Energy-coupling factor transporter ATP-binding protein EcfA1 (281 aa).

The region spanning 7-242 (ISVEDIVFRY…NKELVRIGLD (236 aa)) is the ABC transporter domain. 42-49 (GHNGSGKS) contacts ATP. E168 functions as the Proton acceptor in the catalytic mechanism.

The protein belongs to the ABC transporter superfamily. Energy-coupling factor EcfA family. In terms of assembly, forms a stable energy-coupling factor (ECF) transporter complex composed of 2 membrane-embedded substrate-binding proteins (S component), 2 ATP-binding proteins (A component) and 2 transmembrane proteins (T component).

The protein resides in the cell membrane. ATP-binding (A) component of a common energy-coupling factor (ECF) ABC-transporter complex. Unlike classic ABC transporters this ECF transporter provides the energy necessary to transport a number of different substrates. This is Energy-coupling factor transporter ATP-binding protein EcfA1 from Bacillus subtilis (strain 168).